A 611-amino-acid polypeptide reads, in one-letter code: Dehydrogenase pkfF (611 aa).

Residues 1–19 form the signal peptide; that stretch reads MRHTALLPLVSSFIVPALA. 2 N-linked (GlcNAc...) asparagine glycosylation sites follow: N28 and N38. FAD is bound by residues 50–51, 71–72, and 137–140; these read TS, EA, and HYMV. N-linked (GlcNAc...) asparagine glycosylation is found at N180, N187, N240, N272, N409, and N471. The Proton acceptor role is filled by H547. FAD is bound by residues A581 and 592-593; that span reads PQ.

Belongs to the GMC oxidoreductase family. Requires FAD as cofactor.

The protein operates within secondary metabolite biosynthesis. Its function is as follows. Dehydrogenase; part of the gene cluster that mediates the biosynthesis of aspernidine A, a prenylated isoindolinone. The starting point of the biosynthesis of aspernidin A is the production of orsellinaldehyde by the non-reducing polyketide synthase pkfA. Hydroxylation, methylation of one of the phenol groups, and prenylation, presumably catalyzed by the prenyltransferase pkfE, would be needed to yield aspernidine D. Subsequently, the cytochrome P450 monooxygenase pkfB is responsible for hydroxylation of aspernidine D to yield aspernidine E. The dehydrogenase pkfF may be responsible for further oxidation of aspernidine E to form a dialdehyde intermediate which is further transformed in a series of steps, some of which are enzyme-mediated, to generate aspernidine A. The possibility that additional enzymes outside of the cluster are involved in aspernidine A biosynthesis cannot be excluded. This chain is Dehydrogenase pkfF, found in Emericella nidulans (strain FGSC A4 / ATCC 38163 / CBS 112.46 / NRRL 194 / M139) (Aspergillus nidulans).